The sequence spans 599 residues: UvrABC system protein C (599 aa).

The GIY-YIG domain occupies 18–96; sequence QLPGVYRMLG…IKQHRPPYNI (79 aa). Residues 207–242 form the UVR domain; that stretch reads KELNQELIAKMEEAAEQLAFEKAMFYRDRLGLLREV.

Belongs to the UvrC family. In terms of assembly, interacts with UvrB in an incision complex.

It localises to the cytoplasm. In terms of biological role, the UvrABC repair system catalyzes the recognition and processing of DNA lesions. UvrC both incises the 5' and 3' sides of the lesion. The N-terminal half is responsible for the 3' incision and the C-terminal half is responsible for the 5' incision. This Acinetobacter baylyi (strain ATCC 33305 / BD413 / ADP1) protein is UvrABC system protein C.